The following is a 686-amino-acid chain: ATP-dependent zinc metalloprotease FTSH 6, chloroplastic (686 aa).

The segment covering 1 to 14 (MSPTAMSLTTTTSR) has biased composition (polar residues). The tract at residues 1–52 (MSPTAMSLTTTTSRLPICRAQGGGVAKEKRTTPPPAKITPPSSSSSEAAGLS) is disordered. Residues 1 to 75 (MSPTAMSLTT…LGLTAARPAR (75 aa)) constitute a chloroplast transit peptide. Positions 39 to 52 (TPPSSSSSEAAGLS) are enriched in low complexity. The chain crosses the membrane as a helical span at residues 164 to 184 (VMLLDLLVNFGFPLLFVASLL). An ATP-binding site is contributed by 261–268 (GPPGTGKT). H483 is a binding site for Zn(2+). Residue E484 is part of the active site. 2 residues coordinate Zn(2+): H487 and D562.

The protein in the N-terminal section; belongs to the AAA ATPase family. This sequence in the C-terminal section; belongs to the peptidase M41 family. The cofactor is Zn(2+).

It is found in the plastid. The protein localises to the chloroplast thylakoid membrane. Its function is as follows. Probable ATP-dependent zinc metallopeptidase. The sequence is that of ATP-dependent zinc metalloprotease FTSH 6, chloroplastic (FTSH6) from Oryza sativa subsp. japonica (Rice).